Reading from the N-terminus, the 419-residue chain is Innexin inx5 (419 aa).

At 1–21 the chain is on the cytoplasmic side; the sequence is MFSAVKPLSKYLQFKSIRIYD. A helical membrane pass occupies residues 22 to 42; sequence SVFTIHSRCTVVILLTCSLLL. The Extracellular portion of the chain corresponds to 43–162; sequence SARQYFGDPI…QTERQYLRYY (120 aa). Residues 163–183 form a helical membrane-spanning segment; the sequence is QWVIILLLFQSFVFYFPSCLW. The Cytoplasmic portion of the chain corresponds to 184–238; sequence KVWEGRRLKQLCSEVGDALLSEETYNTRLRMLVKYFTTDYEDMHFCYMAKYVFCE. The helical transmembrane segment at 239-259 threads the bilayer; that stretch reads VLNFLISVVNIIVLEVFLNGF. The Extracellular portion of the chain corresponds to 260-320; the sequence is WSKYLRALAT…ILPLNILNEK (61 aa). A helical membrane pass occupies residues 321-341; the sequence is IFVFLWAWFLLMALMSGLNLL. Residues 342–419 are Cytoplasmic-facing; that stretch reads CRLAMICSRY…ASGSTLESPV (78 aa).

The protein belongs to the pannexin family. As to expression, expressed in the cortex of the pupal CNS and at low levels in the wing imaginal disk.

The protein resides in the cell membrane. Its subcellular location is the cell junction. It is found in the gap junction. Structural component of the gap junctions. The polypeptide is Innexin inx5 (Inx5) (Drosophila melanogaster (Fruit fly)).